The sequence spans 737 residues: 1,4-alpha-glucan branching enzyme GlgB (737 aa).

The active-site Nucleophile is aspartate 419. Catalysis depends on glutamate 472, which acts as the Proton donor.

The protein belongs to the glycosyl hydrolase 13 family. GlgB subfamily. In terms of assembly, monomer.

It carries out the reaction Transfers a segment of a (1-&gt;4)-alpha-D-glucan chain to a primary hydroxy group in a similar glucan chain.. It participates in glycan biosynthesis; glycogen biosynthesis. Catalyzes the formation of the alpha-1,6-glucosidic linkages in glycogen by scission of a 1,4-alpha-linked oligosaccharide from growing alpha-1,4-glucan chains and the subsequent attachment of the oligosaccharide to the alpha-1,6 position. The chain is 1,4-alpha-glucan branching enzyme GlgB from Cellvibrio japonicus (strain Ueda107) (Pseudomonas fluorescens subsp. cellulosa).